The chain runs to 198 residues: Ribonuclease HII (198 aa).

Positions 10–198 constitute an RNase H type-2 domain; the sequence is HLVAGVDEVG…PVRRALGIAS (189 aa). Aspartate 16, glutamate 17, and aspartate 108 together coordinate a divalent metal cation.

The protein belongs to the RNase HII family. It depends on Mn(2+) as a cofactor. Requires Mg(2+) as cofactor.

The protein resides in the cytoplasm. The catalysed reaction is Endonucleolytic cleavage to 5'-phosphomonoester.. In terms of biological role, endonuclease that specifically degrades the RNA of RNA-DNA hybrids. The chain is Ribonuclease HII from Cronobacter sakazakii (strain ATCC BAA-894) (Enterobacter sakazakii).